The chain runs to 185 residues: Peptide deformylase 2 (185 aa).

2 residues coordinate Fe cation: Cys108 and His150. Residue Glu151 is part of the active site. Residue His154 participates in Fe cation binding.

Belongs to the polypeptide deformylase family. It depends on Fe(2+) as a cofactor.

It catalyses the reaction N-terminal N-formyl-L-methionyl-[peptide] + H2O = N-terminal L-methionyl-[peptide] + formate. In terms of biological role, removes the formyl group from the N-terminal Met of newly synthesized proteins. Requires at least a dipeptide for an efficient rate of reaction. N-terminal L-methionine is a prerequisite for activity but the enzyme has broad specificity at other positions. The chain is Peptide deformylase 2 from Nitrosomonas europaea (strain ATCC 19718 / CIP 103999 / KCTC 2705 / NBRC 14298).